The following is a 270-amino-acid chain: A-type potassium channel modulatory protein KCNIP2 (270 aa).

Residues 1-17 (MRGQGRKESLSESRDLD) are compositionally biased toward basic and acidic residues. A disordered region spans residues 1–34 (MRGQGRKESLSESRDLDGSYDQLTGHPPGPSKKA). At serine 9 the chain carries Phosphoserine. S-palmitoyl cysteine attachment occurs at residues cysteine 45 and cysteine 46. The EF-hand 1; degenerate domain maps to 81–137 (FELSTVCHRPEGLEQLQEQTKFTRRELQVLYRGFKNECPSGIVNEENFKQIYSQFFP). EF-hand domains lie at 140–175 (DSSN…ILRG), 176–211 (TIDD…IYDM), and 224–259 (APRE…DENI). Residues aspartate 153, asparagine 155, aspartate 157, serine 159, aspartate 164, aspartate 189, asparagine 191, aspartate 193, cysteine 195, glutamate 200, aspartate 237, asparagine 239, aspartate 241, and glutamate 248 each coordinate Ca(2+). The interaction with KCND2 stretch occupies residues 257 to 270 (ENIMRSMQLFDNVI).

The protein belongs to the recoverin family. As to quaternary structure, component of heteromultimeric potassium channels. Identified in potassium channel complexes containing KCND1, KCND2, KCND3, KCNIP1, KCNIP2, KCNIP3, KCNIP4, DPP6 and DPP10. The KCND2-KCNIP2 channel complex contains four KCND2 and four KCNIP2 subunits. Interacts with KCND2. Probably part of a complex consisting of KCNIP1, KCNIP2 isoform 3 and KCND2. At least isoform 2 and isoform 3 can self-associate to form homodimers and homotetramers. Isoform 3 interacts with KCNIP1 in a calcium-dependent manner. Interacts with KCND3; each KCNIP2 monomer interacts with two adjacent KCND3 subunits, through both the N-terminal inactivation ball of a KCND3 subunit and a C-terminal helix from the adjacent KCND3 subunit, clamping them together; this interaction modulates the channel gating kinetics. Post-translationally, palmitoylated. Palmitoylation enhances association with the plasma membrane. As to expression, expressed in heart, brain and lung. In brain, abundantly expressed in striatum, hippocampus and olfactory bulb, moderately expressed in cerebral cortex and lowly expressed in thalamus and hypothalamus. Isoform 1 is predominant in cerebral cortex, striatum and hippocampus. Isoform 1, isoform 2 and isoform 3 are equally expressed in olfactory bulb. Iisoform 3 is expressed at high levels and isoform 1 at low levels in heart (in PubMed:11263977).

Its subcellular location is the cell membrane. In terms of biological role, regulatory subunit of Kv4/D (Shal)-type voltage-gated rapidly inactivating A-type potassium channels. Modulates channel density, inactivation kinetics and rate of recovery from inactivation in a calcium-dependent and isoform-specific manner. Involved in KCND2 and KCND3 trafficking to the cell surface. Essential for the expression of I(To) currents in the heart. Required for normal protein levels of KCND2 in the heart ventricle. In Rattus norvegicus (Rat), this protein is A-type potassium channel modulatory protein KCNIP2.